The sequence spans 575 residues: Bifunctional decalin synthase calF (575 aa).

The signal sequence occupies residues 1-18; sequence MSFKPLLLSLSLLSPALG. N-linked (GlcNAc...) asparagine glycosylation is found at asparagine 46, asparagine 103, asparagine 127, asparagine 175, asparagine 268, asparagine 308, asparagine 359, asparagine 425, and asparagine 485. Residues 118–297 enclose the FAD-binding PCMH-type domain; it reads LGNYASYSIN…LSMTTKVFQD (180 aa).

It belongs to the oxygen-dependent FAD-linked oxidoreductase family.

It functions in the pathway secondary metabolite biosynthesis. Its function is as follows. Bifunctional decaline synthase; part of the gene cluster that mediates the biosynthesis of calbistrin A and related compounds. Calbistrin A is a secondary metabolite with an interesting structure that was recently found to have bioactivity against leukemia cells. It consists of two polyketides linked by an ester bond: a bicyclic decalin containing polyketide and a linear 12 carbon dioic acid structure. The polyketide synthase calA is probably responsible for forming the decalin moiety. Because calA lacks a designated enoylreductase (ER) domain, the required activity is provided by the trans-enoyl reductase calK. Following release from the PKS, calF then probably catalyzes the oxidation and the subsequent Diels Alder cycloisomerization that lead to the formation of the decalin moiety. The decalin polyketide backbone includes two C-methyl groups, at C7 and C11 in backbone, of which the C7 position is probably methylated by the methyltransferase domain of calA. A candidate for adding the methyl group at C11, if not done by CalA, is the cluster methyltransferase calH. Several additional tailoring enzymes within the cluster could be involved in the modification of the decalin polyketide product. Those include the 3 cytochrome P450 monooxygenases CalE, CalG and CalL, of which one might be responsible for the introduction of the extra hydroxyl group attached to the backbone of the decalin moiety, at position C9 in the backbone, that allows for attachment of the linear moiety. One tailoring enzyme activity that is expected to be involved in biosynthesis of calbistrin is an acyltransferase for connecting the two polyketide synthase products, and which could be performed by the cluster acyltransferase calJ. The enzyme responsible for the biosynthesis of the linear moiety, probably a second PKS, has not been identified yet. The sequence is that of Bifunctional decalin synthase calF from Penicillium decumbens.